The chain runs to 274 residues: Chemotaxis protein methyltransferase 1 (274 aa).

The CheR-type methyltransferase domain occupies 1-274 (MSAANADFEL…CSPGIIYRAK (274 aa)). S-adenosyl-L-methionine-binding positions include asparagine 72, threonine 74, arginine 78, glutamate 115, aspartate 144, 200–201 (NL), and 217–218 (RN).

The catalysed reaction is L-glutamyl-[protein] + S-adenosyl-L-methionine = [protein]-L-glutamate 5-O-methyl ester + S-adenosyl-L-homocysteine. Functionally, methylation of the membrane-bound methyl-accepting chemotaxis proteins (MCP) to form gamma-glutamyl methyl ester residues in MCP. The chain is Chemotaxis protein methyltransferase 1 (cheR1) from Pseudomonas aeruginosa (strain ATCC 15692 / DSM 22644 / CIP 104116 / JCM 14847 / LMG 12228 / 1C / PRS 101 / PAO1).